The following is a 66-amino-acid chain: Opicalcin-1 (66 aa).

A signal peptide spans 1-22 (MKPSLIIVTFIVVFMAISCVAA). A propeptide spanning residues 23–31 (DDEQETWIE) is cleaved from the precursor. 3 disulfide bridges follow: C36–C50, C43–C54, and C49–C65. Residues 55–57 (KRR) are essential for stimulation of [3H]ryanodine binding to RYR1.

This sequence belongs to the scorpion calcin family. As to expression, expressed by the venom gland.

Its subcellular location is the secreted. This toxin stabilizes ryanodine receptor 1 (RyR1) opening in a long-lasting subconductance state (35% of the full conductance state). Furthermore, it triggers calcium release from sarcoplasmic vesicles (2 nM are enough to induce a sharp release, and 67% of the total calcium is released after toxin (100 nM) addition) probably by acting as a cell-penetrating peptide (CPP). In addition, it has been shown to dose-dependently stimulate ryanodine binding to RyR1 (EC(50)=0.3 nM). It also augments the bell-shaped calcium-[3H]ryanodine binding curve that is maximal at about 10 uM calcium concentration. It binds a different site as ryanodine. It acts synergistically with caffeine. In vivo, intracerebroventricular injection into mice induces neurotoxic symptoms, followed by death. The polypeptide is Opicalcin-1 (Opistophthalmus carinatus (African yellow leg scorpion)).